Here is a 110-residue protein sequence, read N- to C-terminus: uncharacterized protein (110 aa).

This is an uncharacterized protein from Schizosaccharomyces pombe (strain 972 / ATCC 24843) (Fission yeast).